A 962-amino-acid chain; its full sequence is Integrator complex subunit 7 (962 aa).

Serine 338 and serine 809 each carry phosphoserine.

This sequence belongs to the Integrator subunit 7 family. As to quaternary structure, component of the Integrator complex, composed of core subunits INTS1, INTS2, INTS3, INTS4, INTS5, INTS6, INTS7, INTS8, INTS9/RC74, INTS10, INTS11/CPSF3L, INTS12, INTS13, INTS14 and INTS15. The core complex associates with protein phosphatase 2A subunits PPP2CA and PPP2R1A, to form the Integrator-PP2A (INTAC) complex. Interacts with NABP2.

It localises to the nucleus. The protein resides in the chromosome. It is found in the cytoplasm. Functionally, component of the integrator complex, a multiprotein complex that terminates RNA polymerase II (Pol II) transcription in the promoter-proximal region of genes. The integrator complex provides a quality checkpoint during transcription elongation by driving premature transcription termination of transcripts that are unfavorably configured for transcriptional elongation: the complex terminates transcription by (1) catalyzing dephosphorylation of the C-terminal domain (CTD) of Pol II subunit POLR2A/RPB1 and SUPT5H/SPT5, (2) degrading the exiting nascent RNA transcript via endonuclease activity and (3) promoting the release of Pol II from bound DNA. The integrator complex is also involved in terminating the synthesis of non-coding Pol II transcripts, such as enhancer RNAs (eRNAs), small nuclear RNAs (snRNAs), telomerase RNAs and long non-coding RNAs (lncRNAs). May be not involved in the recruitment of cytoplasmic dynein to the nuclear envelope by different components of the INT complex. Plays a role in DNA damage response (DDR) signaling during the S phase. In Bos taurus (Bovine), this protein is Integrator complex subunit 7 (INTS7).